A 124-amino-acid chain; its full sequence is Glycine cleavage system H protein (124 aa).

The Lipoyl-binding domain occupies 22 to 104; it reads TATVGITDFA…YGDGWMIEIE (83 aa). Residue K63 is modified to N6-lipoyllysine.

Belongs to the GcvH family. As to quaternary structure, the glycine cleavage system is composed of four proteins: P, T, L and H. The cofactor is (R)-lipoate.

Its function is as follows. The glycine cleavage system catalyzes the degradation of glycine. The H protein shuttles the methylamine group of glycine from the P protein to the T protein. In Salinibacter ruber (strain DSM 13855 / M31), this protein is Glycine cleavage system H protein.